We begin with the raw amino-acid sequence, 368 residues long: DNA replication and repair protein RecF (368 aa).

30 to 37 (GNNAQGKT) contacts ATP.

This sequence belongs to the RecF family.

The protein localises to the cytoplasm. Functionally, the RecF protein is involved in DNA metabolism; it is required for DNA replication and normal SOS inducibility. RecF binds preferentially to single-stranded, linear DNA. It also seems to bind ATP. The sequence is that of DNA replication and repair protein RecF from Streptococcus pyogenes serotype M12 (strain MGAS2096).